We begin with the raw amino-acid sequence, 528 residues long: MTSSIKSSLLNLGLLIIFFVFFFLVINCRGESSTCLAVYKQGGAPAVFQSPKCPRWILQNWGSPTHSGAGRCHTAAIQGRRNYQEDRLLCALDLRIPFPGKTGTPKDVLVGIAAVFDGHNGAEASDMASKLLLDYFALHINFLLDATFSAMTRKLIGRFPTKGDHSVILHGVSRDEIMHLYNLDFQMQFRDSLPLHFDDSLPLDIMKEALLRAIHDIDVTFTKEASNRKLNSGSTATIALIADGQLMVASIGDSKALLCSEKFETLEEARATLVKLYRERRRNRGSSPSRFSDFKLEHGNGLLRFIAKELTKDHHPNREDEKIRVEAAGGYVTEWAGVPRVNGQLTVSRAIGDLTYRSYGVISAPEVMDWQPLVANDSFLVVSSDGIFEKLEVQEVCDLLWEVNNQTSSGAGVPSYCSISLADCLVNTAFEKGSMDNMAAVVVPLKSNLVTQLQRKEQSMNDNKDKIASALPCSNCTLPLPNDINLGPLQLKQAQPLGTMFNRLLRLKTEVFAAFICQRTLLGHLKGK.

Residues 8–28 (SLLNLGLLIIFFVFFFLVINC) traverse the membrane as a helical segment. A PPM-type phosphatase domain is found at 71 to 445 (RCHTAAIQGR…DNMAAVVVPL (375 aa)). Residues Asp-117, Gly-118, Asp-385, and Asp-436 each coordinate Mn(2+).

This sequence belongs to the PP2C family. The cofactor is Mg(2+). Mn(2+) serves as cofactor.

The protein resides in the membrane. It carries out the reaction O-phospho-L-seryl-[protein] + H2O = L-seryl-[protein] + phosphate. The enzyme catalyses O-phospho-L-threonyl-[protein] + H2O = L-threonyl-[protein] + phosphate. In Arabidopsis thaliana (Mouse-ear cress), this protein is Probable protein phosphatase 2C 51.